The chain runs to 353 residues: Uroporphyrinogen decarboxylase (353 aa).

Substrate-binding positions include 35-39 (RQAGR), phenylalanine 54, aspartate 84, tyrosine 160, serine 215, and histidine 329.

This sequence belongs to the uroporphyrinogen decarboxylase family. Homodimer.

The protein resides in the cytoplasm. It catalyses the reaction uroporphyrinogen III + 4 H(+) = coproporphyrinogen III + 4 CO2. It functions in the pathway porphyrin-containing compound metabolism; protoporphyrin-IX biosynthesis; coproporphyrinogen-III from 5-aminolevulinate: step 4/4. Functionally, catalyzes the decarboxylation of four acetate groups of uroporphyrinogen-III to yield coproporphyrinogen-III. This is Uroporphyrinogen decarboxylase from Staphylococcus epidermidis (strain ATCC 12228 / FDA PCI 1200).